A 43-amino-acid polypeptide reads, in one-letter code: Delta/kappa-actitoxin-Avd4a (43 aa).

Disulfide bonds link Cys-4–Cys-39, Cys-6–Cys-32, and Cys-22–Cys-40.

The protein belongs to the sea anemone type 3 (BDS) potassium channel toxin family.

The protein localises to the secreted. It is found in the nematocyst. In terms of biological role, acts as a gating modifier on both Kv and Nav ion channels, and also acts on blood pressure. Voltage-dependently inhibits voltage-gated potassium channels Kv3 (Kv3.1/KCNC1, Kv3.2/KCNC2 and Kv3.4/KCNC4) and slows inactivation of the voltage-gated sodium channel Nav1.7/SCN9A. Inhibits all Kv3.1, Kv3.2 and Kv3.4 by about 50% when tested at a voltage of +40 mV (45%, 48% and 56%, respectively). May act by binding residues in voltage-sensing domains S3b and S4 of Kv3. On sodium channel, tests have been done on human Nav1.7/SCN9A (expressed in HEK293 cells) (EC(50)=3 nM) and rat SCG neurons that mostly carry Nav1.7 channels (EC(50)=300 nM). This toxin also reduces blood pressure. The sequence is that of Delta/kappa-actitoxin-Avd4a from Anemonia sulcata (Mediterranean snakelocks sea anemone).